The chain runs to 685 residues: tRNA 5-methylaminomethyl-2-thiouridine biosynthesis bifunctional protein MnmC (685 aa).

The segment at 1–272 (MTAEPNKPCQ…MAAILSSATQ (272 aa)) is tRNA (mnm(5)s(2)U34)-methyltransferase. The interval 278–685 (IGGGLASAHL…LRKLLKGKAL (408 aa)) is FAD-dependent cmnm(5)s(2)U34 oxidoreductase.

The protein in the N-terminal section; belongs to the methyltransferase superfamily. tRNA (mnm(5)s(2)U34)-methyltransferase family. This sequence in the C-terminal section; belongs to the DAO family. It depends on FAD as a cofactor.

Its subcellular location is the cytoplasm. It catalyses the reaction 5-aminomethyl-2-thiouridine(34) in tRNA + S-adenosyl-L-methionine = 5-methylaminomethyl-2-thiouridine(34) in tRNA + S-adenosyl-L-homocysteine + H(+). In terms of biological role, catalyzes the last two steps in the biosynthesis of 5-methylaminomethyl-2-thiouridine (mnm(5)s(2)U) at the wobble position (U34) in tRNA. Catalyzes the FAD-dependent demodification of cmnm(5)s(2)U34 to nm(5)s(2)U34, followed by the transfer of a methyl group from S-adenosyl-L-methionine to nm(5)s(2)U34, to form mnm(5)s(2)U34. This Shewanella baltica (strain OS185) protein is tRNA 5-methylaminomethyl-2-thiouridine biosynthesis bifunctional protein MnmC.